The chain runs to 206 residues: ATP-dependent Clp protease proteolytic subunit 1 (206 aa).

The active-site Nucleophile is the serine 106. Histidine 131 is an active-site residue.

It belongs to the peptidase S14 family. In terms of assembly, fourteen ClpP subunits assemble into 2 heptameric rings which stack back to back to give a disk-like structure with a central cavity, resembling the structure of eukaryotic proteasomes.

It localises to the cytoplasm. The catalysed reaction is Hydrolysis of proteins to small peptides in the presence of ATP and magnesium. alpha-casein is the usual test substrate. In the absence of ATP, only oligopeptides shorter than five residues are hydrolyzed (such as succinyl-Leu-Tyr-|-NHMec, and Leu-Tyr-Leu-|-Tyr-Trp, in which cleavage of the -Tyr-|-Leu- and -Tyr-|-Trp bonds also occurs).. Cleaves peptides in various proteins in a process that requires ATP hydrolysis. Has a chymotrypsin-like activity. Plays a major role in the degradation of misfolded proteins. This chain is ATP-dependent Clp protease proteolytic subunit 1, found in Methylococcus capsulatus (strain ATCC 33009 / NCIMB 11132 / Bath).